The following is a 402-amino-acid chain: MSEARLFTSESVTEGHPDKICDAISDSVLDALLAGDPKSRVAVETLVTTGQVHVVGEVTTNAKEAFADITNTVRERILEIGYDHSDKGFDGETCGVNIGIGRQSPDIAQGVDTAHETRVGGAADPLDSQGAGDQGLMFGYAIADTPELMPLPIALAHRLSRKLTEVRKNGTLDYLRPDGKTQVTVQYDGTTPVRLDTVVLSTQHADGIELDSQLEPEIKQHVIDAVLTELGHQTLDTSNPRILVNPTGKFVLGGPMGDAGLTGRKIIVDTYGGWARHGGGAFSGKDPSKVDRSAAYAMRWVAKNVVAAGLAERVEVQVAYAIGKAAPVGLFVETFGSETVDPVKIEKAIGEVFDLRPGAIVRDLDLLRPIYAPTAAYGHFGRTDIELPWEQLNKVDDLKSAV.

Residue His16 participates in ATP binding. Residue Asp18 participates in Mg(2+) binding. Glu44 serves as a coordination point for K(+). Residues Glu57 and Gln103 each coordinate L-methionine. The tract at residues 103-113 (QSPDIAQGVDT) is flexible loop. Residues 178–180 (DGK), 249–250 (KF), Asp258, 264–265 (RK), Ala281, and Lys285 each bind ATP. Residue Asp258 coordinates L-methionine. Lys289 provides a ligand contact to L-methionine.

This sequence belongs to the AdoMet synthase family. As to quaternary structure, homotetramer; dimer of dimers. Requires Mg(2+) as cofactor. It depends on K(+) as a cofactor.

The protein localises to the cytoplasm. It catalyses the reaction L-methionine + ATP + H2O = S-adenosyl-L-methionine + phosphate + diphosphate. The protein operates within amino-acid biosynthesis; S-adenosyl-L-methionine biosynthesis; S-adenosyl-L-methionine from L-methionine: step 1/1. Functionally, catalyzes the formation of S-adenosylmethionine (AdoMet) from methionine and ATP. The overall synthetic reaction is composed of two sequential steps, AdoMet formation and the subsequent tripolyphosphate hydrolysis which occurs prior to release of AdoMet from the enzyme. In Mycolicibacterium gilvum (strain PYR-GCK) (Mycobacterium gilvum (strain PYR-GCK)), this protein is S-adenosylmethionine synthase.